A 243-amino-acid chain; its full sequence is Uridylate kinase (243 aa).

14–17 (KLSG) serves as a coordination point for ATP. Position 57 (glycine 57) interacts with UMP. Glycine 58 and arginine 62 together coordinate ATP. Residues aspartate 77 and 139-146 (TGRPYFTT) each bind UMP. The ATP site is built by asparagine 167, tyrosine 173, and aspartate 176.

It belongs to the UMP kinase family. In terms of assembly, homohexamer.

It localises to the cytoplasm. The catalysed reaction is UMP + ATP = UDP + ADP. The protein operates within pyrimidine metabolism; CTP biosynthesis via de novo pathway; UDP from UMP (UMPK route): step 1/1. With respect to regulation, inhibited by UTP. Catalyzes the reversible phosphorylation of UMP to UDP. The protein is Uridylate kinase of Mycoplasmopsis pulmonis (strain UAB CTIP) (Mycoplasma pulmonis).